Consider the following 89-residue polypeptide: Small ribosomal subunit protein bS20 (89 aa).

Belongs to the bacterial ribosomal protein bS20 family.

Binds directly to 16S ribosomal RNA. The protein is Small ribosomal subunit protein bS20 of Helicobacter pylori (strain Shi470).